The sequence spans 151 residues: MCDFSEEQTAEFKEAFQLFDRTGDGKILYSQCGDVMRALGQNPTNAEVMKVLGNPKSDEMNLKTLKFEQFLPMMQTIAKNKDQGCFEDYVEGLRVFDKEGNGTVMGAEIRHVLVTLGEKMTEEEVEQLVAGHEDSNGCINYEELVRMVLSG.

Position 2 is an N-acetylcysteine (Cys-2). 3 consecutive EF-hand domains span residues 7 to 42 (EQTAEFKEAFQLFDRTGDGKILYSQCGDVMRALGQN), 84 to 119 (GCFEDYVEGLRVFDKEGNGTVMGAEIRHVLVTLGEK), and 119 to 151 (KMTEEEVEQLVAGHEDSNGCINYEELVRMVLSG).

In terms of assembly, myosin is a hexamer of 2 heavy chains and 4 light chains.

Functionally, regulatory light chain of myosin. Does not bind calcium. The chain is Myosin light polypeptide 6 (MYL6) from Gallus gallus (Chicken).